A 230-amino-acid chain; its full sequence is Ribonuclease 3 (230 aa).

Residues 5–134 (EALLKSSFAI…FLGALLLDKG (130 aa)) enclose the RNase III domain. Position 47 (Glu-47) interacts with Mg(2+). Asp-51 is a catalytic residue. Residues Asp-120 and Glu-123 each contribute to the Mg(2+) site. Glu-123 is an active-site residue. The DRBM domain occupies 160 to 229 (DYKTSLQEIL…AENALKALSE (70 aa)).

It belongs to the ribonuclease III family. In terms of assembly, homodimer. The cofactor is Mg(2+).

It is found in the cytoplasm. The enzyme catalyses Endonucleolytic cleavage to 5'-phosphomonoester.. Its function is as follows. Digests double-stranded RNA. Involved in the processing of primary rRNA transcript to yield the immediate precursors to the large and small rRNAs (23S and 16S). Processes some mRNAs, and tRNAs when they are encoded in the rRNA operon. Processes pre-crRNA and tracrRNA of type II CRISPR loci if present in the organism. In Streptococcus uberis (strain ATCC BAA-854 / 0140J), this protein is Ribonuclease 3.